Consider the following 999-residue polypeptide: Tyrosine-protein kinase Mer (999 aa).

Positions 1 to 20 (MGPAPLPLLLGLFLPALWRR) are cleaved as a signal peptide. Over 21–505 (AITEAREEAK…PGNADPVLII (485 aa)) the chain is Extracellular. 2 consecutive Ig-like C2-type domains span residues 81–186 (PQVT…EIVS) and 197–273 (PHFT…LTVS). N-linked (GlcNAc...) asparagine glycosylation is found at asparagine 114, asparagine 170, asparagine 207, asparagine 215, asparagine 234, asparagine 294, asparagine 316, asparagine 329, asparagine 336, asparagine 354, asparagine 389, asparagine 395, asparagine 442, and asparagine 454. Cysteine 115 and cysteine 175 are oxidised to a cystine. Cysteine 218 and cysteine 262 are joined by a disulfide. 2 consecutive Fibronectin type-III domains span residues 286–381 (PPTE…TTEG) and 386–484 (APLN…PAHG). A helical transmembrane segment spans residues 506–526 (FGCFCGFILIGLILYISLAIR). The Cytoplasmic portion of the chain corresponds to 527-999 (KRVQETKFGN…DSSEGSEVLM (473 aa)). Position 543 is a phosphoserine (serine 543). The region spanning 587–858 (LILGKILGEG…VLRLQLEKLL (272 aa)) is the Protein kinase domain. ATP contacts are provided by residues 593–601 (LGEGEFGSV) and lysine 615. Residue aspartate 723 is the Proton acceptor of the active site. 4 positions are modified to phosphotyrosine; by autocatalysis: tyrosine 749, tyrosine 753, tyrosine 754, and tyrosine 872. Serine 935 is modified (phosphoserine).

This sequence belongs to the protein kinase superfamily. Tyr protein kinase family. AXL/UFO subfamily. Interacts (upon activation) with TNK2; stimulates TNK2 autophosphorylation. Interacts (via N-terminus) with extracellular ligands LGALS3, TUB, TULP1 and GAS6. Interacts with VAV1 in a phosphotyrosine-independent manner. Interacts with TIMD4; this interaction enhances TIMD4-mediated efferocytosis. In terms of processing, autophosphorylated on Tyr-749, Tyr-753 and Tyr-754 in the activation loop allowing full activity. Autophosphorylated on Tyr-872 leading to recruitment of downstream partners of the signaling cascade such as PLCG2. Not expressed in normal B- and T-lymphocytes but is expressed in numerous neoplastic B- and T-cell lines. Highly expressed in testis, ovary, prostate, lung, and kidney, with lower expression in spleen, small intestine, colon, and liver.

It is found in the cell membrane. It catalyses the reaction L-tyrosyl-[protein] + ATP = O-phospho-L-tyrosyl-[protein] + ADP + H(+). Functionally, receptor tyrosine kinase that transduces signals from the extracellular matrix into the cytoplasm by binding to several ligands including LGALS3, TUB, TULP1 or GAS6. Regulates many physiological processes including cell survival, migration, differentiation, and phagocytosis of apoptotic cells (efferocytosis). Ligand binding at the cell surface induces autophosphorylation of MERTK on its intracellular domain that provides docking sites for downstream signaling molecules. Following activation by ligand, interacts with GRB2 or PLCG2 and induces phosphorylation of MAPK1, MAPK2, FAK/PTK2 or RAC1. MERTK signaling plays a role in various processes such as macrophage clearance of apoptotic cells, platelet aggregation, cytoskeleton reorganization and engulfment. Functions in the retinal pigment epithelium (RPE) as a regulator of rod outer segments fragments phagocytosis. Also plays an important role in inhibition of Toll-like receptors (TLRs)-mediated innate immune response by activating STAT1, which selectively induces production of suppressors of cytokine signaling SOCS1 and SOCS3. The chain is Tyrosine-protein kinase Mer (MERTK) from Homo sapiens (Human).